The following is a 279-amino-acid chain: Thymidylate synthase (279 aa).

DUMP is bound at residue 133–134; that stretch reads RR. Catalysis depends on cysteine 154, which acts as the Nucleophile. DUMP is bound by residues 178-181, asparagine 189, and 219-221; these read RSND and HIY. Residue aspartate 181 coordinates (6R)-5,10-methylene-5,6,7,8-tetrahydrofolate. Alanine 278 is a binding site for (6R)-5,10-methylene-5,6,7,8-tetrahydrofolate.

The protein belongs to the thymidylate synthase family. Bacterial-type ThyA subfamily. As to quaternary structure, homodimer.

It localises to the cytoplasm. The enzyme catalyses dUMP + (6R)-5,10-methylene-5,6,7,8-tetrahydrofolate = 7,8-dihydrofolate + dTMP. It functions in the pathway pyrimidine metabolism; dTTP biosynthesis. Its function is as follows. Catalyzes the reductive methylation of 2'-deoxyuridine-5'-monophosphate (dUMP) to 2'-deoxythymidine-5'-monophosphate (dTMP) while utilizing 5,10-methylenetetrahydrofolate (mTHF) as the methyl donor and reductant in the reaction, yielding dihydrofolate (DHF) as a by-product. This enzymatic reaction provides an intracellular de novo source of dTMP, an essential precursor for DNA biosynthesis. The protein is Thymidylate synthase of Streptococcus sanguinis (strain SK36).